The following is a 124-amino-acid chain: Ribonuclease pancreatic (124 aa).

Residues 1-13 (KETAAAKFERQHM) are compositionally biased toward basic and acidic residues. Residues 1–24 (KETAAAKFERQHMDSSTSSASSSN) form a disordered region. Substrate-binding residues include K7 and R10. H12 acts as the Proton acceptor in catalysis. 4 cysteine pairs are disulfide-bonded: C26–C84, C40–C95, C58–C110, and C65–C72. Substrate-binding positions include 41–45 (KPVBT), K66, and R85. H119 serves as the catalytic Proton donor.

Belongs to the pancreatic ribonuclease family. As to quaternary structure, monomer. Interacts with and forms tight 1:1 complexes with RNH1. Dimerization of two such complexes may occur. Interaction with RNH1 inhibits this protein. Pancreas.

The protein resides in the secreted. The catalysed reaction is an [RNA] containing cytidine + H2O = an [RNA]-3'-cytidine-3'-phosphate + a 5'-hydroxy-ribonucleotide-3'-[RNA].. It carries out the reaction an [RNA] containing uridine + H2O = an [RNA]-3'-uridine-3'-phosphate + a 5'-hydroxy-ribonucleotide-3'-[RNA].. Its function is as follows. Endonuclease that catalyzes the cleavage of RNA on the 3' side of pyrimidine nucleotides. Acts on single-stranded and double-stranded RNA. The protein is Ribonuclease pancreatic (RNASE1) of Boselaphus tragocamelus (Nilgai).